Consider the following 169-residue polypeptide: MRGTPGDADGGGRAVYQSMCKPITGTINDLNQQVWTLQGQNLVAVPRSDSVTPVTVAVITCKYPEALEQGRGDPIYLGIQNPEMCLYCEKVGEQPTLQLKEQKIMDLYGQPEPVKPFLFYRAKTGRTSTLESVAFPDWFIASSKRDQPIILTSELGKSYNTAFELNIND.

A propeptide spanning residues 1-17 (MRGTPGDADGGGRAVYQ) is cleaved from the precursor.

Belongs to the IL-1 family. As to quaternary structure, interacts with cargo receptor TMED10; the interaction mediates the translocation from the cytoplasm into the ERGIC (endoplasmic reticulum-Golgi intermediate compartment) and thereby secretion. In terms of processing, N-terminal truncation leads to a dramatic enhancement of its activity (&gt;1000-fold). Proteolytically cleaved by cathepsin CTSG. Highly expressed in tissues containing epithelial cells: skin, lung, stomach and esophagus. Expressed in bronchial epithelial. In skin is expressed only in keratinocytes but not in fibroblasts, endothelial cells or melanocytes. Up-regulated in lesional psoriasis skin. Expressed in monocyte-derived dendritic cells and M1 macrophages.

It localises to the cytoplasm. The protein resides in the secreted. In terms of biological role, cytokine that binds to and signals through the IL1RL2/IL-36R receptor which in turn activates NF-kappa-B and MAPK signaling pathways in target cells. Part of the IL-36 signaling system that is thought to be present in epithelial barriers and to take part in local inflammatory response; similar to the IL-1 system with which it shares the coreceptor IL1RAP. Seems to be involved in skin inflammatory response by acting on keratinocytes, dendritic cells and indirectly on T-cells to drive tissue infiltration, cell maturation and cell proliferation. In cultured keratinocytes induces the expression of macrophage, T-cell, and neutrophil chemokines, such as CCL3, CCL4, CCL5, CCL2, CCL17, CCL22, CL20, CCL5, CCL2, CCL17, CCL22, CXCL8, CCL20 and CXCL1; also stimulates its own expression and that of the prototypic cutaneous pro-inflammatory parameters TNF-alpha, S100A7/psoriasin and inducible NOS. May play a role in pro-inflammatory responses during particular neutrophilic airway inflammation: activates mitogen-activated protein kinases and NF-kappa B in primary lung fibroblasts, and stimulates the expression of IL-8 and CXCL3 and Th17 chemokine CCL20 in lung fibroblasts. May be involved in the innate immune response to fungal pathogens, such as Aspergillus fumigatus. The sequence is that of Interleukin-36 gamma from Homo sapiens (Human).